The sequence spans 578 residues: Probable multidrug ABC transporter ATP-binding protein YbhF (578 aa).

2 consecutive ABC transporter domains span residues 6-237 and 330-559; these read ITLN…LMTS and IEAK…PDPT. Residues 40–47 and 362–369 each bind ATP; these read GPDGAGKT and GPNGAGKS.

This sequence belongs to the ABC transporter superfamily. As to quaternary structure, the complex is probably composed of two ATP-binding proteins (YbhF) and two transmembrane proteins (YbhR and YbhS).

Part of the ABC transporter complex YbhFSR that could be involved in efflux of cefoperazone. Probably responsible for energy coupling to the transport system. This is Probable multidrug ABC transporter ATP-binding protein YbhF (ybhF) from Escherichia coli (strain K12).